Here is a 221-residue protein sequence, read N- to C-terminus: Carbonic anhydrase (221 aa).

Residues Cys-57, Asp-59, His-112, and Cys-115 each contribute to the Zn(2+) site.

It belongs to the beta-class carbonic anhydrase family. Requires Zn(2+) as cofactor.

It is found in the cytoplasm. It localises to the nucleus. The protein localises to the mitochondrion intermembrane space. The catalysed reaction is hydrogencarbonate + H(+) = CO2 + H2O. In terms of biological role, catalyzes the reversible hydration of CO(2) to H(2)CO(3). The main role may be to provide inorganic carbon for the bicarbonate-dependent carboxylation reactions catalyzed by pyruvate carboxylase, acetyl-CoA carboxylase and carbamoyl-phosphate synthetase. Involved in protection against oxidative damage. Encodes a substrate for the non-classical protein export pathway for proteins that lack a cleavable signal sequence. The protein is Carbonic anhydrase (NCE103) of Saccharomyces cerevisiae (strain ATCC 204508 / S288c) (Baker's yeast).